We begin with the raw amino-acid sequence, 469 residues long: Adenosylhomocysteinase (469 aa).

Residues threonine 63, aspartate 139, and glutamate 164 each coordinate substrate. 165 to 167 serves as a coordination point for NAD(+); it reads TTT. Positions 194 and 198 each coordinate substrate. NAD(+) is bound by residues asparagine 199, 228 to 233, glutamate 251, asparagine 300, 321 to 323, and asparagine 375; these read GYGDVG and IGH.

Belongs to the adenosylhomocysteinase family. Requires NAD(+) as cofactor.

The protein resides in the cytoplasm. It carries out the reaction S-adenosyl-L-homocysteine + H2O = L-homocysteine + adenosine. The protein operates within amino-acid biosynthesis; L-homocysteine biosynthesis; L-homocysteine from S-adenosyl-L-homocysteine: step 1/1. Its function is as follows. May play a key role in the regulation of the intracellular concentration of adenosylhomocysteine. The sequence is that of Adenosylhomocysteinase from Pseudomonas syringae pv. syringae (strain B728a).